We begin with the raw amino-acid sequence, 441 residues long: Zinc finger and BTB domain-containing protein 8A (441 aa).

The 69-residue stretch at 24–92 (CDCSILVEGK…VYSGKLSLTG (69 aa)) folds into the BTB domain. Positions 135 to 248 (LSDKDTGSNG…HVSQSEEQVQ (114 aa)) are disordered. Phosphoserine occurs at positions 161 and 167. Residues Lys178, Lys182, and Lys199 each participate in a glycyl lysine isopeptide (Lys-Gly) (interchain with G-Cter in SUMO2) cross-link. 2 stretches are compositionally biased toward basic and acidic residues: residues 198–208 (AKHEQRKDPIK) and 227–242 (GKGDARTSDSGHHVSQ). 2 consecutive C2H2-type zinc fingers follow at residues 282 to 304 (FKCPYCTHVVKRKADLKRHLRCH) and 310 to 333 (YPCQACGKRFSRLDHLSSHFRTIH). Residue Lys437 forms a Glycyl lysine isopeptide (Lys-Gly) (interchain with G-Cter in SUMO2) linkage.

The protein resides in the nucleus. Functionally, may be involved in transcriptional regulation. The polypeptide is Zinc finger and BTB domain-containing protein 8A (Zbtb8a) (Rattus norvegicus (Rat)).